The following is a 587-amino-acid chain: 2-succinyl-5-enolpyruvyl-6-hydroxy-3-cyclohexene-1-carboxylate synthase (587 aa).

This sequence belongs to the TPP enzyme family. MenD subfamily. Homodimer. Requires Mg(2+) as cofactor. Mn(2+) is required as a cofactor. Thiamine diphosphate serves as cofactor.

The enzyme catalyses isochorismate + 2-oxoglutarate + H(+) = 5-enolpyruvoyl-6-hydroxy-2-succinyl-cyclohex-3-ene-1-carboxylate + CO2. Its pathway is quinol/quinone metabolism; 1,4-dihydroxy-2-naphthoate biosynthesis; 1,4-dihydroxy-2-naphthoate from chorismate: step 2/7. It participates in quinol/quinone metabolism; menaquinone biosynthesis. In terms of biological role, catalyzes the thiamine diphosphate-dependent decarboxylation of 2-oxoglutarate and the subsequent addition of the resulting succinic semialdehyde-thiamine pyrophosphate anion to isochorismate to yield 2-succinyl-5-enolpyruvyl-6-hydroxy-3-cyclohexene-1-carboxylate (SEPHCHC). The sequence is that of 2-succinyl-5-enolpyruvyl-6-hydroxy-3-cyclohexene-1-carboxylate synthase from Chloroflexus aurantiacus (strain ATCC 29366 / DSM 635 / J-10-fl).